The primary structure comprises 299 residues: Apolipoprotein E (299 aa).

An N-terminal signal peptide occupies residues 1-18; sequence MKVLCTVLVVTLLAGCRA. A run of 7 repeats spans residues 74 to 95, 96 to 117, 118 to 139, 140 to 161, 162 to 183, 184 to 205, and 224 to 245. Residues 74-245 form an 8 X 22 AA approximate tandem repeats region; sequence VLMEDTMKAV…RLEEMREQME (172 aa). Met137 is modified (methionine sulfoxide). A Phosphoserine modification is found at Ser141. Residues 152 to 162 form an LDL and other lipoprotein receptors binding region; it reads HLRKLRKRMLR. 156–159 contacts heparin; sequence LRKR. The lipid-binding and lipoprotein association stretch occupies residues 204-273; sequence AALTGQPLQE…GWFEPMVEDM (70 aa). Heparin is bound at residue 219-226; the sequence is GKQLRGRL. The specificity for association with VLDL stretch occupies residues 261–273; the sequence is RLKGWFEPMVEDM.

This sequence belongs to the apolipoprotein A1/A4/E family. Homotetramer. May interact with ABCA1; functionally associated with ABCA1 in the biogenesis of HDLs. May interact with APP/A4 amyloid-beta peptide; the interaction is extremely stable in vitro but its physiological significance is unclear. May interact with MAPT. May interact with MAP2. In the cerebrospinal fluid, interacts with secreted SORL1. Interacts with PMEL; this allows the loading of PMEL luminal fragment on ILVs to induce fibril nucleation. In terms of processing, APOE exists as multiple glycosylated and sialylated glycoforms within cells and in plasma. The extent of glycosylation and sialylation are tissue and context specific. Post-translationally, glycated in plasma VLDL. Phosphorylated by FAM20C in the extracellular medium.

It localises to the secreted. The protein localises to the extracellular space. The protein resides in the extracellular matrix. Its subcellular location is the extracellular vesicle. It is found in the endosome. It localises to the multivesicular body. Functionally, APOE is an apolipoprotein, a protein associating with lipid particles, that mainly functions in lipoprotein-mediated lipid transport between organs via the plasma and interstitial fluids. APOE is a core component of plasma lipoproteins and is involved in their production, conversion and clearance. Apolipoproteins are amphipathic molecules that interact both with lipids of the lipoprotein particle core and the aqueous environment of the plasma. As such, APOE associates with chylomicrons, chylomicron remnants, very low density lipoproteins (VLDL) and intermediate density lipoproteins (IDL) but shows a preferential binding to high-density lipoproteins (HDL). It also binds a wide range of cellular receptors including the LDL receptor/LDLR, the LDL receptor-related proteins LRP1, LRP2 and LRP8 and the very low-density lipoprotein receptor/VLDLR that mediate the cellular uptake of the APOE-containing lipoprotein particles. Finally, APOE also has a heparin-binding activity and binds heparan-sulfate proteoglycans on the surface of cells, a property that supports the capture and the receptor-mediated uptake of APOE-containing lipoproteins by cells. A main function of APOE is to mediate lipoprotein clearance through the uptake of chylomicrons, VLDLs, and HDLs by hepatocytes. APOE is also involved in the biosynthesis by the liver of VLDLs as well as their uptake by peripheral tissues ensuring the delivery of triglycerides and energy storage in muscle, heart and adipose tissues. By participating in the lipoprotein-mediated distribution of lipids among tissues, APOE plays a critical role in plasma and tissues lipid homeostasis. APOE is also involved in two steps of reverse cholesterol transport, the HDLs-mediated transport of cholesterol from peripheral tissues to the liver, and thereby plays an important role in cholesterol homeostasis. First, it is functionally associated with ABCA1 in the biogenesis of HDLs in tissues. Second, it is enriched in circulating HDLs and mediates their uptake by hepatocytes. APOE also plays an important role in lipid transport in the central nervous system, regulating neuron survival and sprouting. The sequence is that of Apolipoprotein E (APOE) from Octodon degus (Degu).